The chain runs to 360 residues: Peptide chain release factor 1 (360 aa).

Gln-235 bears the N5-methylglutamine mark.

This sequence belongs to the prokaryotic/mitochondrial release factor family. Methylated by PrmC. Methylation increases the termination efficiency of RF1.

It is found in the cytoplasm. Peptide chain release factor 1 directs the termination of translation in response to the peptide chain termination codons UAG and UAA. The protein is Peptide chain release factor 1 of Burkholderia thailandensis (strain ATCC 700388 / DSM 13276 / CCUG 48851 / CIP 106301 / E264).